A 374-amino-acid chain; its full sequence is MLRWGGAGLARGLRAVRSAWLRGPRGLPLALVRSAGVPGARDRRAPAPGTQRGRALSLSAAAVVNSAPRPLQPYLRLMRLDKPIGTWLLYLPCTWSIGLAADPGCFPDWYMLSLFGTGAILMRGAGCTINDMWDRDFDKKVTRTANRPIAAGDISTFQSFVFLGGQLTLALGVLLCLNYYSIAMGAASLLLVVTYPLVKRITFWPQLALGLTFNWGALLGWSAVKGSCDPAVCLPLYFSGVMWTLIYDTIYAHQDKKDDALIGLKSTALLFQENTRQWLSGFGVAMVAALSLAGANNGQTVPYYAAVAAVGAHLAHQIYTVDIHRAEDCWDKFTSNRTVGMLLFLGIVLGNLCKEKTEEAKDAEAVRVGSEQTS.

Residues 1-34 (MLRWGGAGLARGLRAVRSAWLRGPRGLPLALVRS) constitute a mitochondrion transit peptide. Residues 35–83 (AGVPGARDRRAPAPGTQRGRALSLSAAAVVNSAPRPLQPYLRLMRLDKP) are Mitochondrial matrix-facing. Residues 84 to 104 (IGTWLLYLPCTWSIGLAADPG) traverse the membrane as a helical segment. Residues 105–108 (CFPD) are Mitochondrial intermembrane-facing. A helical transmembrane segment spans residues 109–129 (WYMLSLFGTGAILMRGAGCTI). Topologically, residues 130–148 (NDMWDRDFDKKVTRTANRP) are mitochondrial matrix. Residues 149–169 (IAAGDISTFQSFVFLGGQLTL) form a helical membrane-spanning segment. The Mitochondrial intermembrane segment spans residues 170–172 (ALG). The helical transmembrane segment at 173-193 (VLLCLNYYSIAMGAASLLLVV) threads the bilayer. Residues 194–200 (TYPLVKR) lie on the Mitochondrial matrix side of the membrane. Residues 201 to 221 (ITFWPQLALGLTFNWGALLGW) traverse the membrane as a helical segment. Over 222-230 (SAVKGSCDP) the chain is Mitochondrial intermembrane. The chain crosses the membrane as a helical span at residues 231-251 (AVCLPLYFSGVMWTLIYDTIY). Residues 252–277 (AHQDKKDDALIGLKSTALLFQENTRQ) are Mitochondrial matrix-facing. Residues 278 to 298 (WLSGFGVAMVAALSLAGANNG) traverse the membrane as a helical segment. Over 299 to 332 (QTVPYYAAVAAVGAHLAHQIYTVDIHRAEDCWDK) the chain is Mitochondrial intermembrane. The helical transmembrane segment at 333-353 (FTSNRTVGMLLFLGIVLGNLC) threads the bilayer. Topologically, residues 354-374 (KEKTEEAKDAEAVRVGSEQTS) are mitochondrial matrix.

It belongs to the UbiA prenyltransferase family. Requires Mg(2+) as cofactor.

It localises to the mitochondrion inner membrane. It catalyses the reaction an all-trans-polyprenyl diphosphate + 4-hydroxybenzoate = a 4-hydroxy-3-(all-trans-polyprenyl)benzoate + diphosphate. The catalysed reaction is all-trans-decaprenyl diphosphate + 4-hydroxybenzoate = 4-hydroxy-3-(all-trans-decaprenyl)benzoate + diphosphate. It carries out the reaction all-trans-nonaprenyl diphosphate + 4-hydroxybenzoate = 4-hydroxy-3-(all-trans-nonaprenyl)benzoate + diphosphate. It functions in the pathway cofactor biosynthesis; ubiquinone biosynthesis. In terms of biological role, mediates the second step in the final reaction sequence of coenzyme Q (CoQ) biosynthesis. Catalyzes the prenylation of para-hydroxybenzoate (PHB) with an all-trans polyprenyl donor (such as all-trans-nonaprenyl diphosphate). The length of the polyprenyl side chain varies depending on the species, in humans, the side chain is comprised of 10 isoprenyls producing CoQ10 (also known as ubiquinone), whereas rodents predominantly generate CoQ9. However, this specificity is not complete, human tissues have low amounts of CoQ9 and rodent organs contain some CoQ10. Plays a central role in the biosynthesis of CoQ9. CoQ9 is a vital molecule that transports electrons from mitochondrial respiratory chain complexes. CoQs also function as cofactors for uncoupling protein and play a role as regulators of the extracellularly-induced ceramide-dependent apoptotic pathway. Regulates mitochondrial permeability transition pore (mPTP) opening and ROS production (pivotal events in cell death) in a tissue specific manner. This is 4-hydroxybenzoate polyprenyltransferase, mitochondrial from Mus musculus (Mouse).